The following is a 46-amino-acid chain: Protein PsbN (46 aa).

Residues Val-10 to Phe-30 traverse the membrane as a helical segment.

The protein belongs to the PsbN family.

The protein localises to the cellular thylakoid membrane. Functionally, may play a role in photosystem I and II biogenesis. The polypeptide is Protein PsbN (Synechococcus sp. (strain RCC307)).